The chain runs to 513 residues: Laccase (513 aa).

4 Plastocyanin-like domains span residues 45–81 (PTRL…STHF), 101–178 (KTVV…HDPK), 240–318 (WPYL…ILAN), and 378–509 (QDEY…MDIT). Residues His105, His107, His153, and His155 each contribute to the Cu cation site. Residues His419, His422, His424, His491, Cys492, His493, His497, and Met502 each contribute to the Cu cation site.

The protein belongs to the multicopper oxidase family. As to quaternary structure, monomer. Cu(2+) is required as a cofactor.

Its subcellular location is the spore coat. It carries out the reaction 4 hydroquinone + O2 = 4 benzosemiquinone + 2 H2O. The catalysed reaction is 2 (4Z,15Z)-bilirubin IXalpha + O2 = 2 biliverdin IXalpha + 2 H2O. Inhibited by azide. Its function is as follows. Multicopper oxidase that catalyzes the oxidation of a variety of substrates, including phenolic and non-phenolic compounds. Substrates include syringaldazine (SGZ), 2,6-dimethoxyphenol (2,6-DMP) and the non-phenolic compound 2,2'-azino-bis(3-ethylbenzothiazoline-6-sulfonic acid) (ABTS). Has no tyrosinase activity. Is implicated in the biosynthesis of a brownish pigment that characterizes sporulating colonies of B.subtilis, and which appears to be a melanin-like product and to confer protection against UV light. In vitro, also shows strong bilirubin oxidase (BOD) activity, and can catalyze the oxidation of free bilirubin (UB), direct bilirubin (conjugated with glucuronic acid, DB) and ditaurobilirubin. This chain is Laccase, found in Bacillus subtilis (strain 168).